Reading from the N-terminus, the 171-residue chain is AP-3 complex subunit sigma (171 aa).

Belongs to the adaptor complexes small subunit family. In terms of assembly, adaptor protein complex 3 (AP-3) is a heterotetramer composed of two large adaptins (delta-type subunit and beta-type subunit), a medium adaptin (mu-type subunit) and a small adaptin (sigma-type subunit).

The protein resides in the endosome membrane. Functionally, part of the AP-3 complex, an adaptor-related complex which is essential for the compartmentalization of the endocytic pathway. This Dictyostelium discoideum (Social amoeba) protein is AP-3 complex subunit sigma (ap3s1).